Here is a 141-residue protein sequence, read N- to C-terminus: MDKKYDITAVLNEDSSMTAISDQFQITLDARPKHTAKGFGPLAALLSGLAACELATANLMAPAKMITINKLLMNVTGSRSTNPTDGYFGLREINLHWEIHSPNSETEIKEFIDFVSKRCPAHNTLQGVSQLKINVNVTLVH.

It belongs to the OsmC/Ohr family. As to quaternary structure, homodimer.

It is found in the cytoplasm. Its function is as follows. Reduces organic and inorganic peroxide substrates. Protects the cell against oxidative stress. The polypeptide is Hydroperoxide reductase (Mycoplasma pneumoniae (strain ATCC 29342 / M129 / Subtype 1) (Mycoplasmoides pneumoniae)).